Consider the following 341-residue polypeptide: Probable electron transfer flavoprotein subunit alpha, mitochondrial (341 aa).

285–313 contributes to the FAD binding site; the sequence is LYIAVGIDGAIQHLAGIKDSKVIAAINRD.

It belongs to the ETF alpha-subunit/FixB family. As to quaternary structure, heterodimer of an alpha and a beta subunit. FAD serves as cofactor.

The protein localises to the mitochondrion matrix. In terms of biological role, the electron transfer flavoprotein serves as a specific electron acceptor for several dehydrogenases, including five acyl-CoA dehydrogenases, glutaryl-CoA and sarcosine dehydrogenase. It transfers the electrons to the main mitochondrial respiratory chain via ETF-ubiquinone oxidoreductase (ETF dehydrogenase). This Schizosaccharomyces pombe (strain 972 / ATCC 24843) (Fission yeast) protein is Probable electron transfer flavoprotein subunit alpha, mitochondrial.